A 337-amino-acid polypeptide reads, in one-letter code: Porphobilinogen deaminase (337 aa).

Position 254 is an S-(dipyrrolylmethanemethyl)cysteine (C254).

Belongs to the HMBS family. Dipyrromethane is required as a cofactor.

It carries out the reaction 4 porphobilinogen + H2O = hydroxymethylbilane + 4 NH4(+). It functions in the pathway porphyrin-containing compound metabolism; protoporphyrin-IX biosynthesis; coproporphyrinogen-III from 5-aminolevulinate: step 2/4. Its function is as follows. Tetrapolymerization of the monopyrrole PBG into the hydroxymethylbilane pre-uroporphyrinogen in several discrete steps. In Neurospora crassa (strain ATCC 24698 / 74-OR23-1A / CBS 708.71 / DSM 1257 / FGSC 987), this protein is Porphobilinogen deaminase (pda-1).